The primary structure comprises 437 residues: UDP-N-acetylmuramate--L-alanine ligase (437 aa).

108-114 (GAHGKTS) lines the ATP pocket.

It belongs to the MurCDEF family.

The protein localises to the cytoplasm. It carries out the reaction UDP-N-acetyl-alpha-D-muramate + L-alanine + ATP = UDP-N-acetyl-alpha-D-muramoyl-L-alanine + ADP + phosphate + H(+). The protein operates within cell wall biogenesis; peptidoglycan biosynthesis. Cell wall formation. In Lysinibacillus sphaericus (strain C3-41), this protein is UDP-N-acetylmuramate--L-alanine ligase.